The sequence spans 207 residues: LexA repressor (207 aa).

The H-T-H motif DNA-binding region spans 28-48 (VREIGEAVGLASSSTVHGHLS). Active-site for autocatalytic cleavage activity residues include Ser-130 and Lys-168.

Belongs to the peptidase S24 family. Homodimer.

It carries out the reaction Hydrolysis of Ala-|-Gly bond in repressor LexA.. In terms of biological role, represses a number of genes involved in the response to DNA damage (SOS response), including recA and lexA. In the presence of single-stranded DNA, RecA interacts with LexA causing an autocatalytic cleavage which disrupts the DNA-binding part of LexA, leading to derepression of the SOS regulon and eventually DNA repair. This Staphylococcus haemolyticus (strain JCSC1435) protein is LexA repressor.